The primary structure comprises 169 residues: Disulfide bond formation protein B 1 (169 aa).

Residues 1 to 14 (MSDNTLYLRREKRF) are Cytoplasmic-facing. Residues 15–31 (LVLLGIICLALIGGALY) form a helical membrane-spanning segment. Residues 32–49 (MQIVLGEAPCPLCILQRY) lie on the Periplasmic side of the membrane. Cys41 and Cys44 are joined by a disulfide. The chain crosses the membrane as a helical span at residues 50-64 (ALLFIAIFAFIGAAM). Residues 65–71 (SGRRGVT) lie on the Cytoplasmic side of the membrane. A helical membrane pass occupies residues 72–89 (VCETLVTLSALGGIAAAG). The Periplasmic segment spans residues 90–144 (RHVWILAHPSDSCGIDVLQPIVDGLPLATLFPTGFQVSGFCTTPYPPVLGLSLAQ). The cysteines at positions 102 and 130 are disulfide-linked. A helical transmembrane segment spans residues 145 to 163 (WALAAFVLTAVLVPACIIR). Residues 164 to 169 (NRRKPY) are Cytoplasmic-facing.

The protein belongs to the DsbB family.

The protein localises to the cell inner membrane. Required for disulfide bond formation in some periplasmic proteins. Acts by oxidizing the DsbA protein. The chain is Disulfide bond formation protein B 1 from Pseudomonas savastanoi pv. phaseolicola (strain 1448A / Race 6) (Pseudomonas syringae pv. phaseolicola (strain 1448A / Race 6)).